The primary structure comprises 549 residues: Carboxylesterase 1C (549 aa).

Residues 1–18 (MWLCALVWASLAVCPIWG) form the signal peptide. Residue asparagine 79 is glycosylated (N-linked (GlcNAc...) asparagine). A disulfide bond links cysteine 87 and cysteine 116. Serine 221 (acyl-ester intermediate) is an active-site residue. Cysteine 273 and cysteine 284 are oxidised to a cystine. N-linked (GlcNAc...) asparagine glycans are attached at residues asparagine 274, asparagine 275, and asparagine 302. Catalysis depends on glutamate 340, which acts as the Charge relay system. N-linked (GlcNAc...) asparagine glycosylation occurs at asparagine 375. Histidine 453 (charge relay system) is an active-site residue. A Phosphoserine modification is found at serine 471. A glycan (N-linked (GlcNAc...) asparagine) is linked at asparagine 476. Residues 546 to 549 (TEHT) carry the Prevents secretion from ER motif.

This sequence belongs to the type-B carboxylesterase/lipase family.

The protein resides in the endoplasmic reticulum lumen. It carries out the reaction a carboxylic ester + H2O = an alcohol + a carboxylate + H(+). In terms of biological role, involved in the detoxification of xenobiotics and in the activation of ester and amide prodrugs. Involved in the extracellular metabolism of lung surfactant. The polypeptide is Carboxylesterase 1C (Ces1c) (Rattus norvegicus (Rat)).